Reading from the N-terminus, the 320-residue chain is D-amino-acid oxidase (320 aa).

The FAD site is built by Gly-18, Gly-19, Val-20, Ile-21, Thr-47, Thr-48, Ser-49, Gly-53, Gly-54, Leu-55, Val-161, and Thr-176. Tyr-220 and Arg-275 together coordinate D-proline. D-serine-binding residues include Tyr-220 and Arg-275. FAD is bound by residues Arg-275, Gly-301, Gly-302, Gly-304, and Thr-306. Residue Gly-302 participates in D-proline binding. D-serine is bound at residue Gly-302.

Belongs to the DAMOX/DASOX family. The cofactor is FAD.

The protein resides in the cytoplasm. It localises to the secreted. It is found in the cell wall. The enzyme catalyses a D-alpha-amino acid + O2 + H2O = a 2-oxocarboxylate + H2O2 + NH4(+). The catalysed reaction is D-leucine + O2 + H2O = 4-methyl-2-oxopentanoate + H2O2 + NH4(+). It catalyses the reaction D-valine + O2 + H2O = 3-methyl-2-oxobutanoate + H2O2 + NH4(+). It carries out the reaction D-isoleucine + O2 + H2O = (R)-3-methyl-2-oxopentanoate + H2O2 + NH4(+). The enzyme catalyses D-methionine + O2 + H2O = 4-methylsulfanyl-2-oxobutanoate + H2O2 + NH4(+). Its function is as follows. Catalyzes the oxidative deamination of D-amino acids with broad substrate specificity. The chain is D-amino-acid oxidase from Streptomyces coelicolor (strain ATCC BAA-471 / A3(2) / M145).